Reading from the N-terminus, the 161-residue chain is MASCVCVVRSEQWPLMTFDTTMSDKVKKINEHIRSQTKVSVQDQILLLDSKILKPHRALSSYGIDKENTIHLTLKVVKPSDEELPLSLVESGDEGQRHLLRVRRSSSVAQVKEMIENVTAVPPKKQIVNCNGKRLEDGKIMADYNIKSGSLLFLTAHCIGG.

2 Ubiquitin-like domains span residues 3-77 and 86-159; these read SCVC…LKVV and LSLV…AHCI.

The protein belongs to the ubiquitin D family. Interacts directly with the 26S proteasome. Interacts with NUB1; this interaction facilitates the linking of UBD-conjugated target protein to the proteasome complex and accelerates its own degradation and that of its conjugates. Interacts (via ubiquitin-like 1 domain) with the spindle checkpoint protein MAD2L1 during mitosis. Present in aggresomes of proteasome inhibited cells. Interacts with HDAC6 under proteasome impairment conditions. Forms a thioester with UBA6 in cells stimulated with tumor necrosis factor-alpha (TNFa) and interferon-gamma (IFNg). Interacts with SQSTM1 and TP53/p53. Can be acetylated.

It is found in the nucleus. The protein localises to the cytoplasm. Functionally, ubiquitin-like protein modifier which can be covalently attached to target proteins and subsequently leads to their degradation by the 26S proteasome, in a NUB1-dependent manner. Conjugation to the target protein is activated by UBA6 via adenylation of its C-terminal glycine. Probably functions as a survival factor. Promotes the expression of the proteasome subunit beta type-9 (PSMB9/LMP2). Regulates TNF-alpha-induced and LPS-mediated activation of the central mediator of innate immunity NF-kappa-B by promoting TNF-alpha-mediated proteasomal degradation of ubiquitinated-I-kappa-B-alpha. Required for TNF-alpha-induced p65 nuclear translocation in renal tubular epithelial cells (RTECs). May be involved in dendritic cell (DC) maturation, the process by which immature dendritic cells differentiate into fully competent antigen-presenting cells that initiate T-cell responses. Mediates mitotic non-disjunction and chromosome instability, in long-term in vitro culture and cancers, by abbreviating mitotic phase and impairing the kinetochore localization of MAD2L1 during the prometaphase stage of the cell cycle. May be involved in the formation of aggresomes when proteasome is saturated or impaired. Mediates apoptosis in a caspase-dependent manner, especially in renal epithelium and tubular cells during renal diseases. This is Ubiquitin D (Ubd) from Rattus norvegicus (Rat).